The following is a 117-amino-acid chain: MDKKSARIRRAARARHMMREQGVTRLVIHRTPRHIYAQVIAPNGSEVLAAASTVEKAIREQVKYTGNKDAAAAVGKAVAERALAKGVQAVAFDRSGFKYHGRVQTLADAAREAGLQF.

It belongs to the universal ribosomal protein uL18 family. In terms of assembly, part of the 50S ribosomal subunit; part of the 5S rRNA/L5/L18/L25 subcomplex. Contacts the 5S and 23S rRNAs.

Its function is as follows. This is one of the proteins that bind and probably mediate the attachment of the 5S RNA into the large ribosomal subunit, where it forms part of the central protuberance. This chain is Large ribosomal subunit protein uL18, found in Haemophilus influenzae (strain 86-028NP).